The primary structure comprises 212 residues: Translation initiation factor IF-3 (212 aa).

The protein belongs to the IF-3 family. Monomer.

Its subcellular location is the cytoplasm. Functionally, IF-3 binds to the 30S ribosomal subunit and shifts the equilibrium between 70S ribosomes and their 50S and 30S subunits in favor of the free subunits, thus enhancing the availability of 30S subunits on which protein synthesis initiation begins. In Synechococcus sp. (strain CC9311), this protein is Translation initiation factor IF-3.